A 429-amino-acid chain; its full sequence is Cytochrome bc1 complex Rieske iron-sulfur subunit (429 aa).

The tract at residues 1–45 (MSRADDDAVGVPPTCGGRSDEEERRIVPGPNPQDGAKDGAKATAV) is disordered. Helical transmembrane passes span 96–116 (VAVWLLLGGVFGLALLLIFLF), 137–157 (PLYGLTFGLSILSIAIGAVLY), and 207–227 (FGVGMGAFGLGTLVAFAGGLI). In terms of domain architecture, Rieske spans 316–410 (RNPVMLIRIK…ITIDTDGYLV (95 aa)). Positions 353, 355, 372, and 375 each coordinate [2Fe-2S] cluster. An intrachain disulfide couples cysteine 358 to cysteine 374.

This sequence belongs to the Rieske iron-sulfur protein family. The cytochrome bc1 complex is composed of a cytochrome b (QcrB), the Rieske iron-sulfur protein (QcrA) and a diheme cytochrome c (QcrC) subunit. It depends on [2Fe-2S] cluster as a cofactor.

It localises to the cell membrane. Its function is as follows. Iron-sulfur subunit of the cytochrome bc1 complex, an essential component of the respiratory electron transport chain required for ATP synthesis. The bc1 complex catalyzes the oxidation of menaquinol and the reduction of cytochrome c in the respiratory chain. The bc1 complex operates through a Q-cycle mechanism that couples electron transfer to generation of the proton gradient that drives ATP synthesis. The protein is Cytochrome bc1 complex Rieske iron-sulfur subunit (qcrA) of Mycobacterium bovis (strain ATCC BAA-935 / AF2122/97).